Consider the following 383-residue polypeptide: Histidine decarboxylase (383 aa).

His-120 contacts substrate. Lys-233 carries the post-translational modification N6-(pyridoxal phosphate)lysine.

Belongs to the group II decarboxylase family. Homotetramer. The cofactor is pyridoxal 5'-phosphate.

It carries out the reaction L-histidine + H(+) = histamine + CO2. The sequence is that of Histidine decarboxylase from Acinetobacter baumannii (strain ATCC 17978 / DSM 105126 / CIP 53.77 / LMG 1025 / NCDC KC755 / 5377).